Consider the following 1461-residue polypeptide: Potassium channel K2 (1461 aa).

6 helical membrane passes run Ile44–Ile64, Phe142–Leu162, Ile183–Ile203, Leu218–Phe238, Ile242–Tyr262, and Ile281–Ala301. The pore-forming intramembrane region spans Tyr322–Pro340. The chain crosses the membrane as a helical span at residues Cys349–Ile369. Residues Lys771 to Arg794 are disordered.

May form oligomers or interact with other proteins.

The protein localises to the membrane. Contributes to transmembrane potassium transport. In Plasmodium falciparum (isolate 3D7), this protein is Potassium channel K2.